The chain runs to 331 residues: tRNA-dihydrouridine(20/20a) synthase (331 aa).

Residues Pro18 to Leu20 and Gln70 each bind FMN. Cys100 (proton donor) is an active-site residue. Residues Lys139, His172, Asn212 to Gly214, and Gly234 to Arg235 contribute to the FMN site.

Belongs to the Dus family. DusA subfamily. FMN serves as cofactor.

The enzyme catalyses 5,6-dihydrouridine(20) in tRNA + NADP(+) = uridine(20) in tRNA + NADPH + H(+). It catalyses the reaction 5,6-dihydrouridine(20) in tRNA + NAD(+) = uridine(20) in tRNA + NADH + H(+). It carries out the reaction 5,6-dihydrouridine(20a) in tRNA + NADP(+) = uridine(20a) in tRNA + NADPH + H(+). The catalysed reaction is 5,6-dihydrouridine(20a) in tRNA + NAD(+) = uridine(20a) in tRNA + NADH + H(+). Catalyzes the synthesis of 5,6-dihydrouridine (D), a modified base found in the D-loop of most tRNAs, via the reduction of the C5-C6 double bond in target uridines. Specifically modifies U20 and U20a in tRNAs. The sequence is that of tRNA-dihydrouridine(20/20a) synthase from Escherichia coli O6:H1 (strain CFT073 / ATCC 700928 / UPEC).